Consider the following 71-residue polypeptide: MKILKIFLLSLLFWLQYSLWFGKNGVLDFIKIYRRVTIEKKNNEYLDMRNNQIILEIENFNNHINKDKKKT.

Residues 1–3 (MKI) lie on the Cytoplasmic side of the membrane. A helical membrane pass occupies residues 4-21 (LKIFLLSLLFWLQYSLWF). Topologically, residues 22 to 71 (GKNGVLDFIKIYRRVTIEKKNNEYLDMRNNQIILEIENFNNHINKDKKKT) are extracellular.

The protein belongs to the FtsB family.

Its subcellular location is the cell membrane. Essential cell division protein. May link together the upstream cell division proteins, which are predominantly cytoplasmic, with the downstream cell division proteins, which are predominantly extracellular. This is Cell division protein FtsB from Buchnera aphidicola subsp. Acyrthosiphon pisum (strain APS) (Acyrthosiphon pisum symbiotic bacterium).